The following is a 387-amino-acid chain: Apoptosis-inducing factor homolog B (387 aa).

FAD contacts are provided by residues 12-16, R47, and D292; that span reads GGGYG.

Belongs to the FAD-dependent oxidoreductase family. The cofactor is FAD.

Functionally, putative FAD-dependent oxidoreductase. The sequence is that of Apoptosis-inducing factor homolog B (aifB) from Dictyostelium discoideum (Social amoeba).